Reading from the N-terminus, the 71-residue chain is MFTMKKSLLLFFFLGTISLSLCEQERGADEDDGVEITEEEVKRGLMDTVKNVAKNLAGHMLDKLKCKITGC.

Positions 1 to 20 are cleaved as a signal peptide; that stretch reads MFTMKKSLLLFFFLGTISLS. Residues 21–44 constitute a propeptide that is removed on maturation; the sequence is LCEQERGADEDDGVEITEEEVKRG. Cys-66 and Cys-71 are joined by a disulfide.

As to expression, expressed by the skin glands.

Its subcellular location is the secreted. In terms of biological role, antibacterial activity against Gram-positive bacterium S.aureus and Gram-negative bacterium E.coli. Has activity against C.albicans. The sequence is that of Ranatuerin-2P from Lithobates pipiens (Northern leopard frog).